A 462-amino-acid polypeptide reads, in one-letter code: UDP-N-acetylmuramate--L-alanine ligase (462 aa).

119–125 is an ATP binding site; that stretch reads GTHGKTT.

This sequence belongs to the MurCDEF family.

The protein localises to the cytoplasm. It catalyses the reaction UDP-N-acetyl-alpha-D-muramate + L-alanine + ATP = UDP-N-acetyl-alpha-D-muramoyl-L-alanine + ADP + phosphate + H(+). It participates in cell wall biogenesis; peptidoglycan biosynthesis. Its function is as follows. Cell wall formation. This chain is UDP-N-acetylmuramate--L-alanine ligase, found in Parabacteroides distasonis (strain ATCC 8503 / DSM 20701 / CIP 104284 / JCM 5825 / NCTC 11152).